We begin with the raw amino-acid sequence, 185 residues long: MGRSKKSRKPGALGAPEPMVTRNRSESDVEGRERKRVKKRKGLKSGSRHSDGSEAKQRKAALARDPRLGSKKKIPLIVEPAKKLTKQERKLSNEQELEMLENDAQLNTLLDRIENGENLGAGLQKFVDEKLDRIEHLMGRLGLLEPEDDEEEIFEEAPVASKKKASSDEDLLSQFEDFDLDSFKG.

Disordered regions lie at residues 1–74 (MGRS…KKKI) and 145–169 (EPEDDEEEIFEEAPVASKKKASSDE). The span at 23 to 33 (NRSESDVEGRE) shows a compositional bias: basic and acidic residues. Residues 34–47 (RKRVKKRKGLKSGS) show a composition bias toward basic residues. Basic and acidic residues predominate over residues 48–68 (RHSDGSEAKQRKAALARDPRL). Acidic residues predominate over residues 145-155 (EPEDDEEEIFE).

This sequence belongs to the YihI family. Interacts with Der.

Its function is as follows. A GTPase-activating protein (GAP) that modifies Der/EngA GTPase function. May play a role in ribosome biogenesis. The polypeptide is Der GTPase-activating protein YihI (Vibrio atlanticus (strain LGP32) (Vibrio splendidus (strain Mel32))).